A 133-amino-acid chain; its full sequence is MKVDLDWVHHKLQEVVNHAYTPFSKFKVACMLVANNQAFYGVNIENASYPVTLCAERSAIANMVTSIGKATIDYVFVYFDTKTPTNSPCGMCRQNIFEFATDKTQLFCIEKDKSFKQFTIPEILKGGFRSYEQ.

The region spanning 3–131 is the CMP/dCMP-type deaminase domain; sequence VDLDWVHHKL…EILKGGFRSY (129 aa). Residue 43–45 coordinates substrate; it reads NIE. Position 54 (Cys-54) interacts with Zn(2+). The active-site Proton donor is the Glu-56. Zn(2+)-binding residues include Cys-89 and Cys-92.

This sequence belongs to the cytidine and deoxycytidylate deaminase family. As to quaternary structure, homodimer. It depends on Zn(2+) as a cofactor.

The enzyme catalyses cytidine + H2O + H(+) = uridine + NH4(+). It catalyses the reaction 2'-deoxycytidine + H2O + H(+) = 2'-deoxyuridine + NH4(+). Functionally, this enzyme scavenges exogenous and endogenous cytidine and 2'-deoxycytidine for UMP synthesis. In Mycoplasma pneumoniae (strain ATCC 29342 / M129 / Subtype 1) (Mycoplasmoides pneumoniae), this protein is Cytidine deaminase (cdd).